Consider the following 351-residue polypeptide: Fe(3+) ions import ATP-binding protein FbpC (351 aa).

One can recognise an ABC transporter domain in the interval 7 to 237 (VVLKNICKRF…PKSMFMANFM (231 aa)). Residue 39–46 (GPSGCGKT) participates in ATP binding.

This sequence belongs to the ABC transporter superfamily. Fe(3+) ion importer (TC 3.A.1.10) family. The complex is composed of two ATP-binding proteins (FbpC), two transmembrane proteins (FbpB) and a solute-binding protein (FbpA).

The protein resides in the cell inner membrane. The enzyme catalyses Fe(3+)(out) + ATP + H2O = Fe(3+)(in) + ADP + phosphate + H(+). Its function is as follows. Part of the ABC transporter complex FbpABC involved in Fe(3+) ions import. Responsible for energy coupling to the transport system. The polypeptide is Fe(3+) ions import ATP-binding protein FbpC (Vibrio cholerae serotype O1 (strain ATCC 39315 / El Tor Inaba N16961)).